A 170-amino-acid polypeptide reads, in one-letter code: Adenine phosphoribosyltransferase (170 aa).

It belongs to the purine/pyrimidine phosphoribosyltransferase family. As to quaternary structure, homodimer.

The protein resides in the cytoplasm. It catalyses the reaction AMP + diphosphate = 5-phospho-alpha-D-ribose 1-diphosphate + adenine. It participates in purine metabolism; AMP biosynthesis via salvage pathway; AMP from adenine: step 1/1. Catalyzes a salvage reaction resulting in the formation of AMP, that is energically less costly than de novo synthesis. This is Adenine phosphoribosyltransferase from Brevibacillus brevis (strain 47 / JCM 6285 / NBRC 100599).